The following is a 210-amino-acid chain: MPHLLHLDSSADLATSRSRAVTAAFADTWRARGEEYTVTHRDLHRDPLPHFADAEQHWPAAARRPGANPPAEQDALTATLHAEVLAADVVLVGAPLYNYTVPSTLKVWLDHLHIPGVLAGEGSQPLAGRPAVVVSSRGATYDAGSPTEGWDHGVPVLRIVLGNSLGMDVHVVQTSATLADRLPEMAALKERGAAEFQAALAAARELARTL.

Residues S10 and 16–18 (SRS) contribute to the FMN site.

This sequence belongs to the azoreductase type 1 family. Homodimer. Requires FMN as cofactor.

The enzyme catalyses 2 a quinone + NADH + H(+) = 2 a 1,4-benzosemiquinone + NAD(+). The catalysed reaction is N,N-dimethyl-1,4-phenylenediamine + anthranilate + 2 NAD(+) = 2-(4-dimethylaminophenyl)diazenylbenzoate + 2 NADH + 2 H(+). Its function is as follows. Quinone reductase that provides resistance to thiol-specific stress caused by electrophilic quinones. Functionally, also exhibits azoreductase activity. Catalyzes the reductive cleavage of the azo bond in aromatic azo compounds to the corresponding amines. The protein is FMN-dependent NADH:quinone oxidoreductase of Kineococcus radiotolerans (strain ATCC BAA-149 / DSM 14245 / SRS30216).